Consider the following 208-residue polypeptide: LexA repressor (208 aa).

The segment at residues 28–48 is a DNA-binding region (H-T-H motif); it reads RAEIARQLGFRSANAAEEHLK. Catalysis depends on for autocatalytic cleavage activity residues S125 and K162.

Belongs to the peptidase S24 family. In terms of assembly, homodimer.

It carries out the reaction Hydrolysis of Ala-|-Gly bond in repressor LexA.. Represses a number of genes involved in the response to DNA damage (SOS response), including recA and lexA. In the presence of single-stranded DNA, RecA interacts with LexA causing an autocatalytic cleavage which disrupts the DNA-binding part of LexA, leading to derepression of the SOS regulon and eventually DNA repair. The protein is LexA repressor of Alteromonas mediterranea (strain DSM 17117 / CIP 110805 / LMG 28347 / Deep ecotype).